The primary structure comprises 176 residues: Ribosome rescue factor SmrB (176 aa).

A Smr domain is found at 93–168 (LDLHGYRQSE…GDAALLVLID (76 aa)).

This sequence belongs to the SmrB family. As to quaternary structure, associates with collided ribosomes, but not with correctly translating polysomes.

Acts as a ribosome collision sensor. Detects stalled/collided disomes (pairs of ribosomes where the leading ribosome is stalled and a second ribosome has collided with it) and endonucleolytically cleaves mRNA at the 5' boundary of the stalled ribosome. Stalled/collided disomes form a new interface (primarily via the 30S subunits) that binds SmrB. Cleaved mRNA becomes available for tmRNA ligation, leading to ribosomal subunit dissociation and rescue of stalled ribosomes. This Shewanella baltica (strain OS223) protein is Ribosome rescue factor SmrB.